The sequence spans 289 residues: RNA-binding protein CP31B, chloroplastic (289 aa).

A chloroplast-targeting transit peptide spans 1-71 (MTSSVLTPSL…NSSPVVTFVS (71 aa)). RRM domains lie at 113-191 (AKLF…RAAP) and 207-285 (FRIY…VAEE).

Post-translationally, ADP-ribosylated by the Pseudomonas syringae type III effector HopU1. ADP-ribosylation reduces the ability of the protein to bind RNA.

Its subcellular location is the plastid. It localises to the chloroplast. Its function is as follows. Required for specific RNA editing events in chloroplasts and stabilizes specific chloroplast mRNAs. The protein is RNA-binding protein CP31B, chloroplastic of Arabidopsis thaliana (Mouse-ear cress).